We begin with the raw amino-acid sequence, 397 residues long: MNKQVYMDYSATTYTKPEVLEEMLPFFTENFGNPSSLYSFSDKTKKAVNLARERVSKALNAEKNEIFFTSGGSEADNWAIKGIAYANKKKGNHIITTKIEHHAILHTAQFLEKEGFKVTYLPVDEEGFVSVEDIKNAITDETILVSVMFANNEIGTIEPIKEIGELCKEKNIYFHTDAVQAIGHVDIDVKDMNIDLLSMSAHKFYGPKGVGALYIKNGVKIQNLIHGGGQERGKRASTENTAGIVGLGKAIELAMENMPEENEKLSNLRGRLIRGIEARIPEVKLNGPKDMSRRLPNNVNFSFIGIEGETLLLDLDMNGIFGSTGSACASASLDPSHVLLSIGLPHETAHGSLRLSLGAKNTEEDIDYVLEVLPKIIKQRREMSPLWEDYMKNKEEK.

Pyridoxal 5'-phosphate contacts are provided by residues 72–73 (GS), Asn152, Gln180, and 200–202 (SAH). Lys203 bears the N6-(pyridoxal phosphate)lysine mark. Thr238 contacts pyridoxal 5'-phosphate. The Cysteine persulfide intermediate role is filled by Cys328. Cys328 provides a ligand contact to [2Fe-2S] cluster.

This sequence belongs to the class-V pyridoxal-phosphate-dependent aminotransferase family. NifS/IscS subfamily. Homodimer. Forms a heterotetramer with IscU, interacts with other sulfur acceptors. Requires pyridoxal 5'-phosphate as cofactor.

It localises to the cytoplasm. It carries out the reaction (sulfur carrier)-H + L-cysteine = (sulfur carrier)-SH + L-alanine. Its pathway is cofactor biosynthesis; iron-sulfur cluster biosynthesis. Its function is as follows. Master enzyme that delivers sulfur to a number of partners involved in Fe-S cluster assembly, tRNA modification or cofactor biosynthesis. Catalyzes the removal of elemental sulfur atoms from cysteine to produce alanine. Functions as a sulfur delivery protein for Fe-S cluster synthesis onto IscU, an Fe-S scaffold assembly protein, as well as other S acceptor proteins. The polypeptide is Cysteine desulfurase IscS (Clostridium botulinum (strain ATCC 19397 / Type A)).